A 77-amino-acid chain; its full sequence is Large ribosomal subunit protein bL28 (77 aa).

A disordered region spans residues 1-25 (MARVCQVTGKAPMSGNNVSHANNKT).

Belongs to the bacterial ribosomal protein bL28 family.

This chain is Large ribosomal subunit protein bL28, found in Paraburkholderia phymatum (strain DSM 17167 / CIP 108236 / LMG 21445 / STM815) (Burkholderia phymatum).